Here is a 445-residue protein sequence, read N- to C-terminus: tRNA-2-methylthio-N(6)-dimethylallyladenosine synthase (445 aa).

Residues Lys-2–Glu-122 form the MTTase N-terminal domain. Cys-11, Cys-47, Cys-85, Cys-157, Cys-161, and Cys-164 together coordinate [4Fe-4S] cluster. The region spanning Arg-143–Arg-378 is the Radical SAM core domain. Residues Arg-378 to Ser-440 form the TRAM domain.

Belongs to the methylthiotransferase family. MiaB subfamily. Monomer. [4Fe-4S] cluster is required as a cofactor.

Its subcellular location is the cytoplasm. The catalysed reaction is N(6)-dimethylallyladenosine(37) in tRNA + (sulfur carrier)-SH + AH2 + 2 S-adenosyl-L-methionine = 2-methylsulfanyl-N(6)-dimethylallyladenosine(37) in tRNA + (sulfur carrier)-H + 5'-deoxyadenosine + L-methionine + A + S-adenosyl-L-homocysteine + 2 H(+). Functionally, catalyzes the methylthiolation of N6-(dimethylallyl)adenosine (i(6)A), leading to the formation of 2-methylthio-N6-(dimethylallyl)adenosine (ms(2)i(6)A) at position 37 in tRNAs that read codons beginning with uridine. The polypeptide is tRNA-2-methylthio-N(6)-dimethylallyladenosine synthase (Methylobacterium radiotolerans (strain ATCC 27329 / DSM 1819 / JCM 2831 / NBRC 15690 / NCIMB 10815 / 0-1)).